The chain runs to 246 residues: Bis(5'-nucleosyl)-tetraphosphatase PrpE [asymmetrical] (246 aa).

The protein belongs to the PrpE family. It depends on Ni(2+) as a cofactor.

The enzyme catalyses P(1),P(4)-bis(5'-guanosyl) tetraphosphate + H2O = GMP + GTP + 2 H(+). Asymmetrically hydrolyzes Ap4p to yield AMP and ATP. This Bacillus cereus (strain AH187) protein is Bis(5'-nucleosyl)-tetraphosphatase PrpE [asymmetrical].